A 139-amino-acid polypeptide reads, in one-letter code: NADPH-dependent 7-cyano-7-deazaguanine reductase (139 aa).

The active-site Thioimide intermediate is the Cys-34. The Proton donor role is filled by Asp-41. Residues 56-58 (VEL) and 75-76 (HE) contribute to the substrate site.

It belongs to the GTP cyclohydrolase I family. QueF type 1 subfamily.

The protein localises to the cytoplasm. It catalyses the reaction 7-aminomethyl-7-carbaguanine + 2 NADP(+) = 7-cyano-7-deazaguanine + 2 NADPH + 3 H(+). Its pathway is tRNA modification; tRNA-queuosine biosynthesis. Its function is as follows. Catalyzes the NADPH-dependent reduction of 7-cyano-7-deazaguanine (preQ0) to 7-aminomethyl-7-deazaguanine (preQ1). This chain is NADPH-dependent 7-cyano-7-deazaguanine reductase, found in Nitrosospira multiformis (strain ATCC 25196 / NCIMB 11849 / C 71).